The sequence spans 403 residues: CinA-like protein (403 aa).

This sequence belongs to the CinA family.

This chain is CinA-like protein, found in Petrotoga mobilis (strain DSM 10674 / SJ95).